A 367-amino-acid polypeptide reads, in one-letter code: Glutamate 5-kinase 2 (367 aa).

K10 lines the ATP pocket. The substrate site is built by S50, D136, and N148. ATP is bound by residues 168 to 169 (TD) and 210 to 216 (TGGMATK). Residues 275–353 (SGQIVIDAGA…KQIGELLDYD (79 aa)) form the PUA domain.

Belongs to the glutamate 5-kinase family.

Its subcellular location is the cytoplasm. The enzyme catalyses L-glutamate + ATP = L-glutamyl 5-phosphate + ADP. Its pathway is amino-acid biosynthesis; L-proline biosynthesis; L-glutamate 5-semialdehyde from L-glutamate: step 1/2. In terms of biological role, catalyzes the transfer of a phosphate group to glutamate to form L-glutamate 5-phosphate. This is Glutamate 5-kinase 2 from Pseudoalteromonas translucida (strain TAC 125).